The following is a 234-amino-acid chain: MASSGQPKVVLLDIEGTVCPISFVKDVLFPYALSALPATLEAQWDKPEFSQYRDAFPAEHASSQEALTAHVKDLMSRDVKIAYLKSLQGYLWESGYKSGELKAPLFDDVAPKFVQWKKAGEEIMIYSSGSVAAQKLLFKHTNGHPADLIPEISDFFDTVNAGPKQEASSYQTILAAHPEFPEANSWLFLSDNVKEVEAAKQAGMQSFVVERPGNAELSAEDREKHRVIKTFAEI.

2 residues coordinate Mg(2+): Asp-13 and Glu-15. Substrate contacts are provided by residues 127–128 and Lys-164; that span reads SS. Residue Asp-191 coordinates Mg(2+).

The protein belongs to the HAD-like hydrolase superfamily. MasA/MtnC family. As to quaternary structure, monomer. The cofactor is Mg(2+).

It is found in the cytoplasm. The protein localises to the nucleus. The enzyme catalyses 5-methylsulfanyl-2,3-dioxopentyl phosphate + H2O = 1,2-dihydroxy-5-(methylsulfanyl)pent-1-en-3-one + phosphate. It functions in the pathway amino-acid biosynthesis; L-methionine biosynthesis via salvage pathway; L-methionine from S-methyl-5-thio-alpha-D-ribose 1-phosphate: step 3/6. Its pathway is amino-acid biosynthesis; L-methionine biosynthesis via salvage pathway; L-methionine from S-methyl-5-thio-alpha-D-ribose 1-phosphate: step 4/6. Bifunctional enzyme that catalyzes the enolization of 2,3-diketo-5-methylthiopentyl-1-phosphate (DK-MTP-1-P) into the intermediate 2-hydroxy-3-keto-5-methylthiopentenyl-1-phosphate (HK-MTPenyl-1-P), which is then dephosphorylated to form the acireductone 1,2-dihydroxy-3-keto-5-methylthiopentene (DHK-MTPene). The sequence is that of Enolase-phosphatase E1 from Podospora anserina (strain S / ATCC MYA-4624 / DSM 980 / FGSC 10383) (Pleurage anserina).